A 56-amino-acid chain; its full sequence is Large ribosomal subunit protein bL32 (56 aa).

Residues 1-16 are compositionally biased toward basic residues; it reads MAVQKSKKSRSMRGMR. The segment at 1 to 33 is disordered; the sequence is MAVQKSKKSRSMRGMRRSHDALTTSAVSVDATS. The span at 21–33 shows a compositional bias: polar residues; it reads ALTTSAVSVDATS.

It belongs to the bacterial ribosomal protein bL32 family.

This chain is Large ribosomal subunit protein bL32, found in Aliivibrio fischeri (strain ATCC 700601 / ES114) (Vibrio fischeri).